We begin with the raw amino-acid sequence, 473 residues long: Probable dipeptidase (473 aa).

C10 is a catalytic residue.

Belongs to the peptidase C69 family.

It carries out the reaction an L-aminoacyl-L-amino acid + H2O = 2 an L-alpha-amino acid. This is Probable dipeptidase from Latilactobacillus sakei (Lactobacillus sakei).